A 415-amino-acid chain; its full sequence is UDP-N-acetylglucosamine 1-carboxyvinyltransferase 1 (415 aa).

23–24 (KN) is a binding site for phosphoenolpyruvate. Residue R92 participates in UDP-N-acetyl-alpha-D-glucosamine binding. The Proton donor role is filled by C116. C116 is subject to 2-(S-cysteinyl)pyruvic acid O-phosphothioketal. Residues 121 to 125 (RPIDL), D304, and V326 contribute to the UDP-N-acetyl-alpha-D-glucosamine site.

This sequence belongs to the EPSP synthase family. MurA subfamily.

It localises to the cytoplasm. It carries out the reaction phosphoenolpyruvate + UDP-N-acetyl-alpha-D-glucosamine = UDP-N-acetyl-3-O-(1-carboxyvinyl)-alpha-D-glucosamine + phosphate. It participates in cell wall biogenesis; peptidoglycan biosynthesis. Functionally, cell wall formation. Adds enolpyruvyl to UDP-N-acetylglucosamine. The sequence is that of UDP-N-acetylglucosamine 1-carboxyvinyltransferase 1 from Caldanaerobacter subterraneus subsp. tengcongensis (strain DSM 15242 / JCM 11007 / NBRC 100824 / MB4) (Thermoanaerobacter tengcongensis).